The following is a 293-amino-acid chain: Diaminopimelate epimerase (293 aa).

Residues Asn-17, Gln-47, and Asn-67 each coordinate substrate. The active-site Proton donor is the Cys-76. Substrate-binding positions include 77–78 (GN), Asn-164, Asn-197, and 215–216 (ER). Cys-224 (proton acceptor) is an active-site residue. Residue 225–226 (GS) participates in substrate binding.

Belongs to the diaminopimelate epimerase family. As to quaternary structure, homodimer.

It localises to the cytoplasm. It carries out the reaction (2S,6S)-2,6-diaminopimelate = meso-2,6-diaminopimelate. Its pathway is amino-acid biosynthesis; L-lysine biosynthesis via DAP pathway; DL-2,6-diaminopimelate from LL-2,6-diaminopimelate: step 1/1. Catalyzes the stereoinversion of LL-2,6-diaminopimelate (L,L-DAP) to meso-diaminopimelate (meso-DAP), a precursor of L-lysine and an essential component of the bacterial peptidoglycan. This is Diaminopimelate epimerase from Rhodopseudomonas palustris (strain ATCC BAA-98 / CGA009).